Consider the following 270-residue polypeptide: Homeobox protein pal-1 (270 aa).

3 disordered regions span residues Met-1 to Pro-24, Val-96 to Ala-130, and Leu-175 to Val-201. 2 stretches are compositionally biased toward low complexity: residues Ser-14–Pro-24 and Ser-101–Ala-130. The homeobox DNA-binding region spans Ala-206–Lys-265.

The protein belongs to the Caudal homeobox family. Interacts with tir-1 and let-756. Blastomeres. Embryo. Oocytes.

It localises to the nucleus. Its subcellular location is the chromosome. It is found in the centromere. The protein localises to the kinetochore. Functionally, transcriptional activator. Interacts with promoter regions for tbx-8.9, tbx-9, elt-1, hnd-1, scrt-1, and vab-7 genes. Binds the sequence ATTTATGAC. Binds to the enhancer region of the hlh-1 gene promoter during embryonic body wall muscle development. Activates the gene for mab-5 in embryo development. Necessary for vab-7 expression in C blastomeres in the posterior of embryos. Required for posterior V6 neuroectoblast cell fate specification during postembryonic neurogenesis (patterning) which generates the characteristic ray lineage during male tail development. Binds to ced-3 promoter and activated expression which is crucial for tail-spike cell death. Has a role in E cell specification in endoderm development and body wall muscle development. This chain is Homeobox protein pal-1 (pal-1), found in Caenorhabditis elegans.